A 572-amino-acid polypeptide reads, in one-letter code: uncharacterized protein (572 aa).

A disordered region spans residues 543 to 572; it reads AYKKSSNTNSTTNSMNPRRSTVSSEDWVLN. A compositionally biased stretch (low complexity) spans 547-563; that stretch reads SSNTNSTTNSMNPRRST.

This is an uncharacterized protein from Acanthamoeba polyphaga (Amoeba).